We begin with the raw amino-acid sequence, 490 residues long: Cytochrome P450 2C12, female-specific (490 aa).

Cysteine 435 contacts heme.

This sequence belongs to the cytochrome P450 family. The cofactor is heme.

It is found in the endoplasmic reticulum membrane. It localises to the microsome membrane. The catalysed reaction is an organic molecule + reduced [NADPH--hemoprotein reductase] + O2 = an alcohol + oxidized [NADPH--hemoprotein reductase] + H2O + H(+). Its function is as follows. This P450 is active in 15-beta-hydroxylation of steroid sulfates. The chain is Cytochrome P450 2C12, female-specific (Cyp2c12) from Rattus norvegicus (Rat).